Reading from the N-terminus, the 306-residue chain is Lipoyl synthase 2 (306 aa).

The [4Fe-4S] cluster site is built by C49, C54, C60, C75, C79, C82, and S300. The Radical SAM core domain maps to 61-289 (YAAGTATFLL…AEVACKLGFA (229 aa)).

Belongs to the radical SAM superfamily. Lipoyl synthase family. [4Fe-4S] cluster is required as a cofactor.

The protein localises to the cytoplasm. It catalyses the reaction [[Fe-S] cluster scaffold protein carrying a second [4Fe-4S](2+) cluster] + N(6)-octanoyl-L-lysyl-[protein] + 2 oxidized [2Fe-2S]-[ferredoxin] + 2 S-adenosyl-L-methionine + 4 H(+) = [[Fe-S] cluster scaffold protein] + N(6)-[(R)-dihydrolipoyl]-L-lysyl-[protein] + 4 Fe(3+) + 2 hydrogen sulfide + 2 5'-deoxyadenosine + 2 L-methionine + 2 reduced [2Fe-2S]-[ferredoxin]. It functions in the pathway protein modification; protein lipoylation via endogenous pathway; protein N(6)-(lipoyl)lysine from octanoyl-[acyl-carrier-protein]: step 2/2. Functionally, catalyzes the radical-mediated insertion of two sulfur atoms into the C-6 and C-8 positions of the octanoyl moiety bound to the lipoyl domains of lipoate-dependent enzymes, thereby converting the octanoylated domains into lipoylated derivatives. This is Lipoyl synthase 2 from Prochlorococcus marinus (strain MIT 9313).